Reading from the N-terminus, the 200-residue chain is uncharacterized protein (200 aa).

The protein belongs to the HAD-like hydrolase superfamily. CbbY/CbbZ/Gph/YieH family.

This is an uncharacterized protein from Haemophilus influenzae (strain ATCC 51907 / DSM 11121 / KW20 / Rd).